A 606-amino-acid polypeptide reads, in one-letter code: Urocanate reductase (606 aa).

The segment at residues 1–40 is a signal peptide (tat-type signal); the sequence is MSNLSRRNFITGGAIAALGGTLAIAGCAPKGESSSTVAGA. T111 carries the FMN phosphoryl threonine modification. FAD is bound by residues A163, E182, T191, G195, G196, A197, A305, and D373. R433 serves as the catalytic Proton donor. E572 and I588 together coordinate FAD.

It belongs to the FAD-dependent oxidoreductase 2 family. FRD/SDH subfamily. FAD is required as a cofactor. FMN serves as cofactor. In terms of processing, predicted to be exported by the Tat system. The position of the signal peptide cleavage has not been experimentally proven.

It carries out the reaction dihydrourocanate + A = urocanate + AH2. Its function is as follows. Catalyzes the two-electron reduction of urocanate to dihydrourocanate (also named imidazole propionate or deamino-histidine). Dihydrourocanate is present at higher concentrations in subjects with type 2 diabetes, and directly impairs glucose tolerance and insulin signaling at the level of insulin receptor substrate (IRS) through activation of p38 gamma (MAPK12)-p62-mTORC1. Therefore, the UrdA enzyme from the gut bacteria E.lenta strain DSM 2243 may contribute to the pathogenesis of type 2 diabetes by producing the microbial metabolite dihydrourocanate. The sequence is that of Urocanate reductase from Eggerthella lenta (strain ATCC 25559 / DSM 2243 / CCUG 17323 / JCM 9979 / KCTC 3265 / NCTC 11813 / VPI 0255 / 1899 B) (Eubacterium lentum).